A 316-amino-acid polypeptide reads, in one-letter code: 4-diphosphocytidyl-2-C-methyl-D-erythritol kinase (316 aa).

K32 is an active-site residue. Residue 126–136 (PVGAGLGGGSA) participates in ATP binding. D168 is a catalytic residue.

The protein belongs to the GHMP kinase family. IspE subfamily.

It carries out the reaction 4-CDP-2-C-methyl-D-erythritol + ATP = 4-CDP-2-C-methyl-D-erythritol 2-phosphate + ADP + H(+). The protein operates within isoprenoid biosynthesis; isopentenyl diphosphate biosynthesis via DXP pathway; isopentenyl diphosphate from 1-deoxy-D-xylulose 5-phosphate: step 3/6. Catalyzes the phosphorylation of the position 2 hydroxy group of 4-diphosphocytidyl-2C-methyl-D-erythritol. The polypeptide is 4-diphosphocytidyl-2-C-methyl-D-erythritol kinase (Bifidobacterium longum subsp. infantis (strain ATCC 15697 / DSM 20088 / JCM 1222 / NCTC 11817 / S12)).